Reading from the N-terminus, the 128-residue chain is Aspartate 1-decarboxylase (128 aa).

The active-site Schiff-base intermediate with substrate; via pyruvic acid is the serine 25. At serine 25 the chain carries Pyruvic acid (Ser). Substrate is bound at residue threonine 57. The active-site Proton donor is tyrosine 58. 73 to 75 is a binding site for substrate; sequence GAA.

It belongs to the PanD family. As to quaternary structure, heterooctamer of four alpha and four beta subunits. Pyruvate is required as a cofactor. Is synthesized initially as an inactive proenzyme, which is activated by self-cleavage at a specific serine bond to produce a beta-subunit with a hydroxyl group at its C-terminus and an alpha-subunit with a pyruvoyl group at its N-terminus.

Its subcellular location is the cytoplasm. The catalysed reaction is L-aspartate + H(+) = beta-alanine + CO2. It functions in the pathway cofactor biosynthesis; (R)-pantothenate biosynthesis; beta-alanine from L-aspartate: step 1/1. Functionally, catalyzes the pyruvoyl-dependent decarboxylation of aspartate to produce beta-alanine. This is Aspartate 1-decarboxylase from Chlorobium limicola (strain DSM 245 / NBRC 103803 / 6330).